We begin with the raw amino-acid sequence, 631 residues long: PTS system glucosamine-specific EIICBA component (631 aa).

In terms of domain architecture, PTS EIIC type-1 spans 3 to 382 (KKAFQILQQL…WNLKTPGRET (380 aa)). Helical transmembrane passes span 12 to 32 (LGRA…LLRF), 56 to 76 (LIFA…AGLA), 106 to 126 (HLID…AYLY), 149 to 169 (IITS…WPLI), 196 to 216 (LLIP…MMGE), 243 to 263 (FMMG…LAII), 298 to 318 (FLFV…VIFV), and 350 to 370 (VVIP…RFAI). One can recognise a PTS EIIB type-1 domain in the interval 397-478 (DQLAFHVLQA…KTIMAGGVPA (82 aa)). C419 functions as the Phosphocysteine intermediate; for EIIB activity in the catalytic mechanism. C419 carries the phosphocysteine modification. In terms of domain architecture, PTS EIIA type-1 spans 515–619 (DQVFSEKMMG…SAITPVIFTN (105 aa)). H567 (tele-phosphohistidine intermediate; for EIIA activity) is an active-site residue. Position 567 is a phosphohistidine (H567).

Its subcellular location is the cell membrane. The enzyme catalyses D-glucosamine(out) + N(pros)-phospho-L-histidyl-[protein] = D-glucosamine 6-phosphate(in) + L-histidyl-[protein]. Its function is as follows. The phosphoenolpyruvate-dependent sugar phosphotransferase system (sugar PTS), a major carbohydrate active transport system, catalyzes the phosphorylation of incoming sugar substrates concomitantly with their translocation across the cell membrane. This system is involved in glucosamine transport. In vitro, when expressed in the absence of GamR and NagP, can transport N-acetylglucosamine. In addition, plays an important role in the phosphorylation of EIIA-deficient PTS transporters. The EIIA domain can transfer a phosphoryl group to EIIA-deficient PTS transporters, enabling growth with maltose, N-acetylglucosamine, sucrose or trehalose as the sole carbon source. The sequence is that of PTS system glucosamine-specific EIICBA component from Bacillus subtilis (strain 168).